The chain runs to 84 residues: Beta-cardiotoxin CTX21 (84 aa).

Positions 1–21 (MKTLLLTLVVVTIVCLDLGYT) are cleaved as a signal peptide. Cystine bridges form between Cys24-Cys43, Cys36-Cys61, Cys65-Cys76, and Cys77-Cys82.

It belongs to the three-finger toxin family. Short-chain subfamily. Aminergic toxin sub-subfamily. Expressed by the venom gland.

The protein localises to the secreted. Functionally, acts as a beta-blocker by binding to beta-1 and beta-2 adrenergic receptors (ADRB1 and ADRB2). It dose-dependently decreases the heart rate (bradycardia), whereas conventional cardiotoxins increases it. At 100 mg/kg, intraperitoneal injection into mice provokes labored breathing, impaired locomotion, lack of response to external stimuli, and death (after 30 minutes). In Ophiophagus hannah (King cobra), this protein is Beta-cardiotoxin CTX21.